Here is a 486-residue protein sequence, read N- to C-terminus: Maintenance of mitochondrial morphology protein 1 (486 aa).

Residues 1 to 19 (MSNDTSAQPAQSSLSFTQG) lie on the Lumenal side of the membrane. The helical transmembrane segment at 20-40 (LLVGQLSVVLLIGAFIKFFIF) threads the bilayer. The Cytoplasmic portion of the chain corresponds to 41–486 (GEASPSSSRS…GSLPDVVPVT (446 aa)). Disordered regions lie at residues 45–98 (PSSS…RSIL), 269–318 (QTST…AGTT), 393–412 (VRGQ…GVST), and 420–486 (ARDA…VPVT). Residues 51-61 (QTRRTSPHKRS) are compositionally biased toward basic residues. Over residues 70 to 79 (LGSRSLKEKP) the composition is skewed to basic and acidic residues. Composition is skewed to polar residues over residues 80–96 (SSNV…NTRS), 269–291 (QTST…NDYS), 307–318 (EQATQANNAGTT), and 401–412 (EVGSSGNAGVST). One can recognise an SMP-LTD domain in the interval 125-382 (QPESLDWFNV…EPRVQVVALP (258 aa)). Basic and acidic residues-rich tracts occupy residues 429–440 (HATRDADMEGLR) and 462–473 (DSREQACRDDPF).

Belongs to the MMM1 family. Homodimer. Component of the ER-mitochondria encounter structure (ERMES) or MDM complex, composed of MMM1, MDM10, MDM12 and MDM34. An MMM1 homodimer associates with one molecule of MDM12 on each side in a pairwise head-to-tail manner, and the SMP-LTD domains of MMM1 and MDM12 generate a continuous hydrophobic tunnel for phospholipid trafficking.

The protein resides in the endoplasmic reticulum membrane. In terms of biological role, component of the ERMES/MDM complex, which serves as a molecular tether to connect the endoplasmic reticulum (ER) and mitochondria. Components of this complex are involved in the control of mitochondrial shape and protein biogenesis, and function in nonvesicular lipid trafficking between the ER and mitochondria. The MDM12-MMM1 subcomplex functions in the major beta-barrel assembly pathway that is responsible for biogenesis of all outer membrane beta-barrel proteins, and acts in a late step after the SAM complex. The MDM10-MDM12-MMM1 subcomplex further acts in the TOM40-specific pathway after the action of the MDM12-MMM1 complex. Essential for establishing and maintaining the structure of mitochondria and maintenance of mtDNA nucleoids. The chain is Maintenance of mitochondrial morphology protein 1 from Coccidioides immitis (strain RS) (Valley fever fungus).